The primary structure comprises 321 residues: Glucokinase (321 aa).

8 to 13 (GDVGGT) is a binding site for ATP.

Belongs to the bacterial glucokinase family.

The protein localises to the cytoplasm. It catalyses the reaction D-glucose + ATP = D-glucose 6-phosphate + ADP + H(+). The protein is Glucokinase of Salmonella typhi.